Here is a 101-residue protein sequence, read N- to C-terminus: Large ribosomal subunit protein bL28 (101 aa).

The protein belongs to the bacterial ribosomal protein bL28 family.

The protein is Large ribosomal subunit protein bL28 of Rhodopseudomonas palustris (strain ATCC BAA-98 / CGA009).